Reading from the N-terminus, the 414-residue chain is 2,3-diketo-5-methylthiopentyl-1-phosphate enolase (414 aa).

Lys99 (proton acceptor) is an active-site residue. Residues Lys148, 174–177 (KDDE), His265, Gly338, and 360–361 (GG) contribute to the substrate site. Residues Lys174, Asp176, and Glu177 each coordinate Mg(2+). Residue Lys174 is modified to N6-carboxylysine.

Belongs to the RuBisCO large chain family. Type IV subfamily. As to quaternary structure, homodimer. The cofactor is Mg(2+).

It carries out the reaction 5-methylsulfanyl-2,3-dioxopentyl phosphate = 2-hydroxy-5-methylsulfanyl-3-oxopent-1-enyl phosphate. It participates in amino-acid biosynthesis; L-methionine biosynthesis via salvage pathway; L-methionine from S-methyl-5-thio-alpha-D-ribose 1-phosphate: step 3/6. Functionally, catalyzes the enolization of 2,3-diketo-5-methylthiopentyl-1-phosphate (DK-MTP-1-P) into 2-hydroxy-3-keto-5-methylthiopentenyl-1-phosphate (HK-MTPenyl-1-P). The protein is 2,3-diketo-5-methylthiopentyl-1-phosphate enolase of Bacillus cereus (strain ZK / E33L).